Reading from the N-terminus, the 221-residue chain is Probable glutathione S-transferase (221 aa).

The GST N-terminal domain occupies 4–83 (EEVILLDFWP…YIEEVWKDKA (80 aa)). Glutathione is bound by residues Ser-14, Lys-41, Ile-55, and 67-68 (ES). Positions 90–214 (DPYDRAQARF…PKVLEFVKVL (125 aa)) constitute a GST C-terminal domain.

It belongs to the GST superfamily. HSP26 family. Root tip-specific expression.

The enzyme catalyses RX + glutathione = an S-substituted glutathione + a halide anion + H(+). The sequence is that of Probable glutathione S-transferase from Nicotiana tabacum (Common tobacco).